A 161-amino-acid polypeptide reads, in one-letter code: E3 ubiquitin ligase complex SCF subunit sconC (161 aa).

The tract at residues 103–161 is interaction with the F-box domain of F-box proteins; the sequence is ILAANYLDIKGLLDVGCKTVANMIKGKSPEEIRKTFNIQNDFTPEEEDQIRRENEWAEE.

Belongs to the SKP1 family. Component of the SCF (SKP1-CUL1-F-box protein) E3 ubiquitin ligase complexes.

Its pathway is protein modification; protein ubiquitination. Its function is as follows. Essential component of the SCF (SKP1-CUL1-F-box protein) E3 ubiquitin ligase complexes, which mediate the ubiquitination and subsequent proteasomal degradation of target proteins. Controls sulfur metabolite repression, probably by mediating the inactivation or degradation of the metR transcription factor. The chain is E3 ubiquitin ligase complex SCF subunit sconC (sconC) from Aspergillus terreus (strain NIH 2624 / FGSC A1156).